Consider the following 1479-residue polypeptide: C-type mannose receptor 2 (1479 aa).

An N-terminal signal peptide occupies residues 1 to 30 (MVPIRPALAPWPRHLLRCVLLLGGLRLGHP). Topologically, residues 31-1413 (ADSAAALLEP…SAALPESPVA (1383 aa)) are extracellular. The 154-residue stretch at 37–190 (LLEPDVFLIF…SHGKPCTIPF (154 aa)) folds into the Ricin B-type lectin domain. Cysteine 92 and cysteine 111 are disulfide-bonded. 2 N-linked (GlcNAc...) asparagine glycosylation sites follow: asparagine 101 and asparagine 139. The Fibronectin type-II domain maps to 181 to 229 (SHGKPCTIPFKYDNQWFHGCTSTGREDGHLWCATTQDYGKDERWGFCPI). 4 disulfide bridges follow: cysteine 186-cysteine 212, cysteine 200-cysteine 227, cysteine 265-cysteine 358, and cysteine 334-cysteine 350. Residues 243–359 (LTDSCYQFNF…CSIALPYVCK (117 aa)) form the C-type lectin 1 domain. Asparagine 363 carries N-linked (GlcNAc...) asparagine glycosylation. 7 consecutive C-type lectin domains span residues 388–504 (FQGH…SICK), 527–643 (HSPS…RYIC), 677–808 (KLRH…WICK), 831–950 (FQEA…YICK), 978–1106 (FLNK…GFIC), 1131–1242 (YLNH…GAVC), and 1271–1391 (FREH…GVVC). Disulfide bonds link cysteine 409–cysteine 503, cysteine 480–cysteine 495, cysteine 617–cysteine 634, cysteine 703–cysteine 807, cysteine 784–cysteine 799, cysteine 852–cysteine 949, and cysteine 926–cysteine 941. Asparagine 1028 carries N-linked (GlcNAc...) asparagine glycosylation. A disulfide bridge links cysteine 1077 with cysteine 1097. Residue lysine 1141 forms a Glycyl lysine isopeptide (Lys-Gly) (interchain with G-Cter in SUMO1) linkage. Cysteine 1219 and cysteine 1233 are joined by a disulfide. Asparagine 1348 is a glycosylation site (N-linked (GlcNAc...) asparagine). Cysteine 1367 and cysteine 1382 are oxidised to a cystine. A helical membrane pass occupies residues 1414–1434 (LVVVLTAVLLLLALMTAALIL). Residues 1435–1479 (YRRRQSAERGSFEGARYSRSSHSGPAEATEKNILVSDMEMNEQQE) lie on the Cytoplasmic side of the membrane. Positions 1446-1479 (FEGARYSRSSHSGPAEATEKNILVSDMEMNEQQE) are disordered.

In terms of assembly, interacts directly with PLAUR/UPAR and PLAU/pro-UPA to form a tri-molecular complex. Interacts with collagen V and with C-terminal region of type I collagen/COL1A1. In terms of processing, phosphorylated. As to expression, highly expressed in heart, lung and kidney, but little or no expression in brain, thymus or adult liver. Expressed at highly endothelialized sites such as those in choroid plexus and kidney glomerulai as well as in chondrocytes in cartilaginous regions of the embryo.

The protein localises to the membrane. Its function is as follows. May play a role as endocytotic lectin receptor displaying calcium-dependent lectin activity. Internalizes glycosylated ligands from the extracellular space for release in an endosomal compartment via clathrin-mediated endocytosis. May be involved in plasminogen activation system controlling the extracellular level of PLAUR/PLAU, and thus may regulate protease activity at the cell surface. May contribute to cellular uptake, remodeling and degradation of extracellular collagen matrices. May participate in remodeling of extracellular matrix cooperating with the matrix metalloproteinases (MMPs). This is C-type mannose receptor 2 (Mrc2) from Mus musculus (Mouse).